The chain runs to 195 residues: Large ribosomal subunit protein uL5 (195 aa).

Belongs to the universal ribosomal protein uL5 family. As to quaternary structure, part of the 50S ribosomal subunit; part of the 5S rRNA/L5/L18/L25 subcomplex. Contacts the 5S rRNA and the P site tRNA. Forms a bridge to the 30S subunit in the 70S ribosome.

Functionally, this is one of the proteins that bind and probably mediate the attachment of the 5S RNA into the large ribosomal subunit, where it forms part of the central protuberance. In the 70S ribosome it contacts protein S13 of the 30S subunit (bridge B1b), connecting the 2 subunits; this bridge is implicated in subunit movement. Contacts the P site tRNA; the 5S rRNA and some of its associated proteins might help stabilize positioning of ribosome-bound tRNAs. In Chlorobium chlorochromatii (strain CaD3), this protein is Large ribosomal subunit protein uL5.